The chain runs to 199 residues: Fe/S biogenesis protein NfuA (199 aa).

Cys151 and Cys154 together coordinate [4Fe-4S] cluster.

This sequence belongs to the NfuA family. In terms of assembly, homodimer. [4Fe-4S] cluster serves as cofactor.

Functionally, involved in iron-sulfur cluster biogenesis. Binds a 4Fe-4S cluster, can transfer this cluster to apoproteins, and thereby intervenes in the maturation of Fe/S proteins. Could also act as a scaffold/chaperone for damaged Fe/S proteins. The sequence is that of Fe/S biogenesis protein NfuA from Xanthomonas oryzae pv. oryzae (strain MAFF 311018).